A 467-amino-acid chain; its full sequence is MSKSLQLIKEHDVKWIDLRFTDTKGKQQHVTMPARDVDDDFFEYGKMFDGSSIAGWKGIEASDMILMPDDSTAVLDPFTEEPTLIIVCDIIEPSTMQGYDRDPRAIARRAEEYLKSTGIGDTAFFGPEPEFFIFDEVKYKSDISGSMFKIFSEQAAWNTDADFEGGNKGHRPGVKGGYFPVPPVDHDHEIRTAMCNALEEMGLKVEVHHHEVATAGQNEIGVSFNTLVAKADEVQTLKYCVHNVADAYGKTVTFMPKPLYGDNGSGMHVHMSIAKDGKNTFAGEGYAGLSDTALYFIGGIIKHGKALNGFTNPSTNSYKRLVPGFEAPVMLAYSARNRSASIRIPYVNSPKARRIEARFPDPSANPYLAFAALLMAGLDGIQNKIHPGDAADKNLYDLPPEEAKEIPQVCGSLKEALEELDKGRAFLTKGGVFSDDFIDAYLELKSEEEIKVRTFVHPLEYDLYYSV.

One can recognise a GS beta-grasp domain in the interval His11–Thr95. In terms of domain architecture, GS catalytic spans Pro103–Val467. Positions 128 and 130 each coordinate Mg(2+). Position 206 (Glu206) interacts with ATP. The Mg(2+) site is built by Glu211 and Glu219. L-glutamate is bound by residues Asn263–Gly264 and Gly264. Position 268 (His268) interacts with Mg(2+). Residues His270–Ser272 and Ser272 contribute to the ATP site. Residues Arg320, Glu326, and Arg338 each coordinate L-glutamate. Residues Arg338, Arg343, and Lys351 each coordinate ATP. Glu356 contributes to the Mg(2+) binding site. Arg358 lines the L-glutamate pocket. Position 396 is an O-AMP-tyrosine (Tyr396).

It belongs to the glutamine synthetase family. Oligomer of 12 subunits arranged in the form of two hexameric ring. It depends on Mg(2+) as a cofactor.

It localises to the cytoplasm. It catalyses the reaction L-glutamate + NH4(+) + ATP = L-glutamine + ADP + phosphate + H(+). The activity of this enzyme could be controlled by adenylation under conditions of abundant glutamine. Its function is as follows. Catalyzes the ATP-dependent biosynthesis of glutamine from glutamate and ammonia. The sequence is that of Glutamine synthetase from Azotobacter vinelandii.